A 147-amino-acid polypeptide reads, in one-letter code: Basic phospholipase A2 beta-bungarotoxin A4 chain (147 aa).

A signal peptide spans 1-19; sequence MNPAHLLVLSAVCVSLLGA. The propeptide occupies 20–27; the sequence is ANIPPHPL. 6 disulfides stabilise this stretch: C54–C146, C56–C72, C71–C127, C78–C120, C88–C113, and C106–C118. 3 residues coordinate Ca(2+): Y55, G57, and G59. Residue H75 is part of the active site. Residue D76 participates in Ca(2+) binding. D121 is an active-site residue.

The protein belongs to the phospholipase A2 family. Group I subfamily. D49 sub-subfamily. As to quaternary structure, heterodimer; disulfide-linked. The A chain has phospholipase A2 activity and the B chain shows homology with the basic protease inhibitors. It depends on Ca(2+) as a cofactor. In terms of tissue distribution, expressed by the venom gland.

The protein localises to the secreted. The catalysed reaction is a 1,2-diacyl-sn-glycero-3-phosphocholine + H2O = a 1-acyl-sn-glycero-3-phosphocholine + a fatty acid + H(+). Snake venom phospholipase A2 (PLA2) that shows presynaptic neurotoxicity. The A chain has phospholipase activity. PLA2 catalyzes the calcium-dependent hydrolysis of the 2-acyl groups in 3-sn-phosphoglycerides. In Bungarus candidus (Malayan krait), this protein is Basic phospholipase A2 beta-bungarotoxin A4 chain.